The sequence spans 89 residues: Small ribosomal subunit protein uS17 (89 aa).

This sequence belongs to the universal ribosomal protein uS17 family. In terms of assembly, part of the 30S ribosomal subunit.

Its function is as follows. One of the primary rRNA binding proteins, it binds specifically to the 5'-end of 16S ribosomal RNA. This Lactiplantibacillus plantarum (strain ATCC BAA-793 / NCIMB 8826 / WCFS1) (Lactobacillus plantarum) protein is Small ribosomal subunit protein uS17.